A 306-amino-acid chain; its full sequence is Ornithine carbamoyltransferase (306 aa).

Carbamoyl phosphate-binding positions include 53–56 (STRT), Q80, R104, and 131–134 (HPCQ). Residues N162, D219, and 223–224 (SM) each bind L-ornithine. Carbamoyl phosphate-binding positions include 259 to 260 (CL) and R287.

It belongs to the aspartate/ornithine carbamoyltransferase superfamily. OTCase family.

It is found in the cytoplasm. The enzyme catalyses carbamoyl phosphate + L-ornithine = L-citrulline + phosphate + H(+). It functions in the pathway amino-acid biosynthesis; L-arginine biosynthesis; L-arginine from L-ornithine and carbamoyl phosphate: step 1/3. Its function is as follows. Reversibly catalyzes the transfer of the carbamoyl group from carbamoyl phosphate (CP) to the N(epsilon) atom of ornithine (ORN) to produce L-citrulline. The chain is Ornithine carbamoyltransferase from Psychrobacter sp. (strain PRwf-1).